Consider the following 300-residue polypeptide: Homoserine kinase (300 aa).

86-96 (PVARGLGSSAT) is a binding site for ATP.

It belongs to the GHMP kinase family. Homoserine kinase subfamily.

Its subcellular location is the cytoplasm. The enzyme catalyses L-homoserine + ATP = O-phospho-L-homoserine + ADP + H(+). It functions in the pathway amino-acid biosynthesis; L-threonine biosynthesis; L-threonine from L-aspartate: step 4/5. Functionally, catalyzes the ATP-dependent phosphorylation of L-homoserine to L-homoserine phosphate. The polypeptide is Homoserine kinase (Persephonella marina (strain DSM 14350 / EX-H1)).